A 158-amino-acid polypeptide reads, in one-letter code: NAD(P)H-quinone oxidoreductase subunit J, chloroplastic (158 aa).

It belongs to the complex I 30 kDa subunit family. As to quaternary structure, NDH is composed of at least 16 different subunits, 5 of which are encoded in the nucleus.

The protein localises to the plastid. It localises to the chloroplast thylakoid membrane. It carries out the reaction a plastoquinone + NADH + (n+1) H(+)(in) = a plastoquinol + NAD(+) + n H(+)(out). The enzyme catalyses a plastoquinone + NADPH + (n+1) H(+)(in) = a plastoquinol + NADP(+) + n H(+)(out). Functionally, NDH shuttles electrons from NAD(P)H:plastoquinone, via FMN and iron-sulfur (Fe-S) centers, to quinones in the photosynthetic chain and possibly in a chloroplast respiratory chain. The immediate electron acceptor for the enzyme in this species is believed to be plastoquinone. Couples the redox reaction to proton translocation, and thus conserves the redox energy in a proton gradient. This is NAD(P)H-quinone oxidoreductase subunit J, chloroplastic from Jasminum nudiflorum (Winter jasmine).